The following is a 662-amino-acid chain: MYIHSSRTVLARYGSRTPLLRPSVLGRYSTSPAATIEARKIALNRDNYIKSVYDRIAKIPPENYRNFSIVAHVDHGKSTLSDRLLELTGVIQPGDKNQVLDRLDVERERGITVKAQTCTMIFNDPRNGQDYLLHLVDTPGHVDFRAEVSRSYASCGGALLLVDATQGVQAQTVANFYLAYSMGLKLIPIINKIDLDAADIPRAMDQVESTFELDRENCLQVSAKTGLNVKSILPAIVDHIPAPDCDINSPLKALLVDSWHDPYVGVVMLLYVKEGTIKKGMKLLSAHTEGRYEVKEVGIMYPDKVPMESIRAGQVGYIVPGMKDPSQAKIGDTFFQYGKHEGLEALPGFEEPKPMVFVGAFPAEGSEFKVMDDHIANLVLNDRSVTLEKETSNALGLGWRLGFLGSLHASVFQERLENEYGAKIILTAPTVPYKIVYKDGTDKIVTNPDEFPGSDLRNQNVDKLMEPYVNAIMTIPDEYIGAVMSLCENNRGIQKELEYLTNGQVLMRYEIPLAQLVEDFFGKLKGCTKGYASLDYEDAGYKKSDIVKMELCVNGEPQDALTQVMHRSQVQARGKEYVVRFKEYLRFQLFEVAIQAKVNNKVVARETIKAKRKDVTQKLHAADISRRKKLLSRQKEGKKQMKASGRVHINHEAYQAFLRRTI.

Residues 1–28 (MYIHSSRTVLARYGSRTPLLRPSVLGRY) constitute a mitochondrion transit peptide. In terms of domain architecture, tr-type G spans 62 to 244 (ENYRNFSIVA…AIVDHIPAPD (183 aa)). GTP contacts are provided by residues 71 to 78 (AHVDHGKS), 137 to 141 (DTPGH), and 191 to 194 (NKID).

The protein belongs to the TRAFAC class translation factor GTPase superfamily. Classic translation factor GTPase family. LepA subfamily.

Its subcellular location is the mitochondrion inner membrane. It catalyses the reaction GTP + H2O = GDP + phosphate + H(+). Promotes mitochondrial protein synthesis. May act as a fidelity factor of the translation reaction, by catalyzing a one-codon backward translocation of tRNAs on improperly translocated ribosomes. Binds to mitochondrial ribosomes in a GTP-dependent manner. In Meyerozyma guilliermondii (strain ATCC 6260 / CBS 566 / DSM 6381 / JCM 1539 / NBRC 10279 / NRRL Y-324) (Yeast), this protein is Translation factor GUF1, mitochondrial.